The primary structure comprises 522 residues: 2-isopropylmalate synthase (522 aa).

A Pyruvate carboxyltransferase domain is found at 5–267 (VIIFDTTLRD…YTNINAREIH (263 aa)). Positions 14, 202, 204, and 238 each coordinate Mn(2+). Residues 392–522 (VMEQLVVQSD…MQQTRELGGV (131 aa)) are regulatory domain.

This sequence belongs to the alpha-IPM synthase/homocitrate synthase family. LeuA type 1 subfamily. As to quaternary structure, homodimer. The cofactor is Mn(2+).

The protein localises to the cytoplasm. It carries out the reaction 3-methyl-2-oxobutanoate + acetyl-CoA + H2O = (2S)-2-isopropylmalate + CoA + H(+). Its pathway is amino-acid biosynthesis; L-leucine biosynthesis; L-leucine from 3-methyl-2-oxobutanoate: step 1/4. Its function is as follows. Catalyzes the condensation of the acetyl group of acetyl-CoA with 3-methyl-2-oxobutanoate (2-ketoisovalerate) to form 3-carboxy-3-hydroxy-4-methylpentanoate (2-isopropylmalate). This Shewanella amazonensis (strain ATCC BAA-1098 / SB2B) protein is 2-isopropylmalate synthase.